Here is a 341-residue protein sequence, read N- to C-terminus: Foldase protein PrsA (341 aa).

The first 22 residues, 1 to 22 (MKNIGRLAVTALIAVFIFSVTG), serve as a signal peptide directing secretion. A lipid anchor (N-palmitoyl cysteine) is attached at C23. A lipid anchor (S-diacylglycerol cysteine) is attached at C23. The region spanning 199–291 (PNKMHLAHIL…FGYHIIKCIK (93 aa)) is the PpiC domain.

The protein belongs to the PrsA family.

It localises to the cell membrane. It carries out the reaction [protein]-peptidylproline (omega=180) = [protein]-peptidylproline (omega=0). Its function is as follows. Plays a major role in protein secretion by helping the post-translocational extracellular folding of several secreted proteins. The protein is Foldase protein PrsA of Clostridium kluyveri (strain NBRC 12016).